We begin with the raw amino-acid sequence, 202 residues long: Cytochrome c oxidase assembly protein CtaG (202 aa).

Over 1-14 (MSENAGTPKKQGRN) the chain is Cytoplasmic. A helical; Signal-anchor for type II membrane protein transmembrane segment spans residues 15–37 (NGAVVMMCLSFVFGMGAMSYAAV). At 38–202 (PLYRIFCQVT…GGAEKIEKKL (165 aa)) the chain is on the periplasmic side.

This sequence belongs to the COX11/CtaG family.

The protein resides in the cell inner membrane. Functionally, exerts its effect at some terminal stage of cytochrome c oxidase synthesis, probably by being involved in the insertion of the copper B into subunit I. In Rhizobium johnstonii (strain DSM 114642 / LMG 32736 / 3841) (Rhizobium leguminosarum bv. viciae), this protein is Cytochrome c oxidase assembly protein CtaG.